A 278-amino-acid chain; its full sequence is Putative cysteine-rich repeat secretory protein 19 (278 aa).

A signal peptide spans methionine 1 to serine 32. 2 Gnk2-homologous domains span residues tyrosine 39–threonine 147 and proline 160–phenylalanine 267.

It belongs to the cysteine-rich repeat secretory protein family.

Its subcellular location is the secreted. The protein is Putative cysteine-rich repeat secretory protein 19 (CRRSP19) of Arabidopsis thaliana (Mouse-ear cress).